Consider the following 92-residue polypeptide: C-C motif chemokine 4 (92 aa).

The first 23 residues, 1-23, serve as a signal peptide directing secretion; that stretch reads MKLCVTVLSLLVLAAAFCSPALS. 2 cysteine pairs are disulfide-bonded: Cys-34/Cys-58 and Cys-35/Cys-74.

This sequence belongs to the intercrine beta (chemokine CC) family. As to quaternary structure, homodimer. Interacts with CCR5. As to expression, detected in peripheral blood mononuclear cells and lymph nodes.

It is found in the secreted. In terms of biological role, monokine with inflammatory and chemokinetic properties. The sequence is that of C-C motif chemokine 4 (CCL4) from Macaca mulatta (Rhesus macaque).